We begin with the raw amino-acid sequence, 107 residues long: MAGGYGVMGDDGSIDYTVHEAWNEATNVYLIVILVSFGLFMYAKRNKRRIMRIFSVPPTEETLSEPNFYDTISKIRLRQQLEMYSISRKYDYQQPQNQADSVQLSLE.

A helical transmembrane segment spans residues 25-43 (ATNVYLIVILVSFGLFMYA).

This sequence belongs to the SMIM19 family.

Its subcellular location is the membrane. The sequence is that of Small integral membrane protein 19 (SMIM19) from Homo sapiens (Human).